Consider the following 221-residue polypeptide: Protein lethal(2)k10201 (221 aa).

2 C2H2-type zinc fingers span residues 74-97 (YSCV…TEQH) and 113-138 (FSCF…IITH). Positions 146–168 (FDHSKNRGKQKHQGKSKPNSMEV) are disordered. Over residues 151–160 (NRGKQKHQGK) the composition is skewed to basic residues.

Functionally, vital for development. The polypeptide is Protein lethal(2)k10201 (l(2)k10201) (Drosophila melanogaster (Fruit fly)).